A 513-amino-acid polypeptide reads, in one-letter code: Maturase K (513 aa).

The protein belongs to the intron maturase 2 family. MatK subfamily.

The protein resides in the plastid. It localises to the chloroplast. Functionally, usually encoded in the trnK tRNA gene intron. Probably assists in splicing its own and other chloroplast group II introns. The polypeptide is Maturase K (Keckiella cordifolia (Heart-leafed penstemon)).